The primary structure comprises 337 residues: NADH-quinone oxidoreductase subunit H (337 aa).

8 helical membrane passes run 13 to 33 (IIIVLQCLAIILPMLGAIAYL), 82 to 102 (AVFIIAPLMTFILALIAWAVI), 115 to 135 (VGVLYLFAVSGLGVYGIIMAG), 154 to 174 (MVSYEVAMGLIIIAVILSAGS), 187 to 207 (GVWYFIPHFPMFVMFLVSILA), 248 to 268 (ILMSGITAILFLGGWLPPVDI), 274 to 294 (IPGIIWFFLKIALILFVFLWV), and 313 to 333 (VFLPGSLIWVVLTAGFLVTFD).

It belongs to the complex I subunit 1 family. NDH-1 is composed of 14 different subunits. Subunits NuoA, H, J, K, L, M, N constitute the membrane sector of the complex.

The protein localises to the cell inner membrane. The enzyme catalyses a quinone + NADH + 5 H(+)(in) = a quinol + NAD(+) + 4 H(+)(out). Functionally, NDH-1 shuttles electrons from NADH, via FMN and iron-sulfur (Fe-S) centers, to quinones in the respiratory chain. The immediate electron acceptor for the enzyme in this species is believed to be ubiquinone. Couples the redox reaction to proton translocation (for every two electrons transferred, four hydrogen ions are translocated across the cytoplasmic membrane), and thus conserves the redox energy in a proton gradient. This subunit may bind ubiquinone. This Rhodospirillum rubrum (strain ATCC 11170 / ATH 1.1.1 / DSM 467 / LMG 4362 / NCIMB 8255 / S1) protein is NADH-quinone oxidoreductase subunit H.